The following is a 293-amino-acid chain: Shikimate kinase (293 aa).

87-97 (PLAGGLKSSSA) is a binding site for ATP.

Belongs to the GHMP kinase family. Archaeal shikimate kinase subfamily.

The protein resides in the cytoplasm. It carries out the reaction shikimate + ATP = 3-phosphoshikimate + ADP + H(+). The protein operates within metabolic intermediate biosynthesis; chorismate biosynthesis; chorismate from D-erythrose 4-phosphate and phosphoenolpyruvate: step 5/7. The sequence is that of Shikimate kinase from Methanosarcina mazei (strain ATCC BAA-159 / DSM 3647 / Goe1 / Go1 / JCM 11833 / OCM 88) (Methanosarcina frisia).